The sequence spans 648 residues: 1-deoxy-D-xylulose-5-phosphate synthase (648 aa).

Thiamine diphosphate contacts are provided by residues H73 and 114–116 (SHA). D145 serves as a coordination point for Mg(2+). Thiamine diphosphate contacts are provided by residues 146-147 (GA), N175, Y286, and E367. N175 is a binding site for Mg(2+).

The protein belongs to the transketolase family. DXPS subfamily. Homodimer. Requires Mg(2+) as cofactor. It depends on thiamine diphosphate as a cofactor.

The catalysed reaction is D-glyceraldehyde 3-phosphate + pyruvate + H(+) = 1-deoxy-D-xylulose 5-phosphate + CO2. It participates in metabolic intermediate biosynthesis; 1-deoxy-D-xylulose 5-phosphate biosynthesis; 1-deoxy-D-xylulose 5-phosphate from D-glyceraldehyde 3-phosphate and pyruvate: step 1/1. Functionally, catalyzes the acyloin condensation reaction between C atoms 2 and 3 of pyruvate and glyceraldehyde 3-phosphate to yield 1-deoxy-D-xylulose-5-phosphate (DXP). This chain is 1-deoxy-D-xylulose-5-phosphate synthase, found in Rhodococcus erythropolis (strain PR4 / NBRC 100887).